The following is a 363-amino-acid chain: MGNTFGHLFRITTFGESHGGGVGVIIDGCPPRLDLSESDIQGDLDRRRPGQSKITTPRKETDTCEIISGVFQGKTLGTPIAILVRNKDARSQDYNEMSVKFRPSHADATYEAKYGIRNWQGGGRSSARETIGRVAAGAIAKKILKQVANVEIVGYVKRIKDLEGNVNPDTVTLEEVESNIVRCPDADMAEKMIDLIDQTRRDKDSIGGVVECVARYVPRGLGEPVFDKLEADLAKAVMSLPASKGFEIGSGFAGTLLTGSEHNDEFYIDDNGNIRTKTNRSGGIQGGISNGEHIIIRVAFKPTATIGKEQKTVTSESEETTLAAKGRHDPCVLSRAVPMVEAMVALVLCDHLLRWQGQCQVLT.

A disordered region spans residues 36–58 (SESDIQGDLDRRRPGQSKITTPR). Arg-47 serves as a coordination point for NADP(+). Residues 124-126 (RSS), Gly-286, 301-305 (KPTAT), and Arg-327 contribute to the FMN site.

The protein belongs to the chorismate synthase family. In terms of assembly, homotetramer. Requires FMNH2 as cofactor.

It catalyses the reaction 5-O-(1-carboxyvinyl)-3-phosphoshikimate = chorismate + phosphate. Its pathway is metabolic intermediate biosynthesis; chorismate biosynthesis; chorismate from D-erythrose 4-phosphate and phosphoenolpyruvate: step 7/7. In terms of biological role, catalyzes the anti-1,4-elimination of the C-3 phosphate and the C-6 proR hydrogen from 5-enolpyruvylshikimate-3-phosphate (EPSP) to yield chorismate, which is the branch point compound that serves as the starting substrate for the three terminal pathways of aromatic amino acid biosynthesis. This reaction introduces a second double bond into the aromatic ring system. This chain is Chorismate synthase, found in Crocosphaera subtropica (strain ATCC 51142 / BH68) (Cyanothece sp. (strain ATCC 51142)).